We begin with the raw amino-acid sequence, 685 residues long: UvrABC system protein B (685 aa).

The region spanning 39-420 is the Helicase ATP-binding domain; it reads EGIGDGLMYQ…TYEAEHQGQV (382 aa). 52 to 59 is a binding site for ATP; the sequence is GVTGSGKT. The short motif at 105-128 is the Beta-hairpin element; sequence YYDYYQPEAYVPSRDLFIEKDSSI. The Helicase C-terminal domain maps to 443 to 596; that stretch reads QVDDLLSEAK…QIAFNQANGI (154 aa). The region spanning 640-675 is the UVR domain; the sequence is AKSIRKLEKEMQEHARNLEFEKAAAARDELFRLRQR.

It belongs to the UvrB family. Forms a heterotetramer with UvrA during the search for lesions. Interacts with UvrC in an incision complex.

It is found in the cytoplasm. Its function is as follows. The UvrABC repair system catalyzes the recognition and processing of DNA lesions. A damage recognition complex composed of 2 UvrA and 2 UvrB subunits scans DNA for abnormalities. Upon binding of the UvrA(2)B(2) complex to a putative damaged site, the DNA wraps around one UvrB monomer. DNA wrap is dependent on ATP binding by UvrB and probably causes local melting of the DNA helix, facilitating insertion of UvrB beta-hairpin between the DNA strands. Then UvrB probes one DNA strand for the presence of a lesion. If a lesion is found the UvrA subunits dissociate and the UvrB-DNA preincision complex is formed. This complex is subsequently bound by UvrC and the second UvrB is released. If no lesion is found, the DNA wraps around the other UvrB subunit that will check the other stand for damage. The chain is UvrABC system protein B from Aromatoleum aromaticum (strain DSM 19018 / LMG 30748 / EbN1) (Azoarcus sp. (strain EbN1)).